Here is a 338-residue protein sequence, read N- to C-terminus: Lipoate-protein ligase A (338 aa).

In terms of domain architecture, BPL/LPL catalytic spans 29–216 (PATQRVLFLW…AFFAHYGERV (188 aa)). Residues Arg71, 76–79 (GAVF), and Lys134 contribute to the ATP site. Position 134 (Lys134) interacts with (R)-lipoate.

Belongs to the LplA family. As to quaternary structure, monomer.

The protein localises to the cytoplasm. The catalysed reaction is L-lysyl-[lipoyl-carrier protein] + (R)-lipoate + ATP = N(6)-[(R)-lipoyl]-L-lysyl-[lipoyl-carrier protein] + AMP + diphosphate + H(+). It functions in the pathway protein modification; protein lipoylation via exogenous pathway; protein N(6)-(lipoyl)lysine from lipoate: step 1/2. It participates in protein modification; protein lipoylation via exogenous pathway; protein N(6)-(lipoyl)lysine from lipoate: step 2/2. Its function is as follows. Catalyzes both the ATP-dependent activation of exogenously supplied lipoate to lipoyl-AMP and the transfer of the activated lipoyl onto the lipoyl domains of lipoate-dependent enzymes. This is Lipoate-protein ligase A from Escherichia fergusonii (strain ATCC 35469 / DSM 13698 / CCUG 18766 / IAM 14443 / JCM 21226 / LMG 7866 / NBRC 102419 / NCTC 12128 / CDC 0568-73).